Here is a 568-residue protein sequence, read N- to C-terminus: Protein downstream neighbor of son homolog (568 aa).

Disordered stretches follow at residues 28-48 and 311-355; these read NKLA…QVDE and MPLK…DDDE. Over residues 315–335 the composition is skewed to polar residues; sequence SDNSGNAHDNSFNEESTTTSL.

The protein belongs to the DONSON family. Expression peaks during late G1 and S phase (at protein level).

It is found in the nucleus. In terms of biological role, essential for DNA amplification in the ovary and required for cell proliferation during development. In Drosophila melanogaster (Fruit fly), this protein is Protein downstream neighbor of son homolog (hd).